Reading from the N-terminus, the 145-residue chain is Transcriptional regulator ZitR (145 aa).

In terms of domain architecture, HTH marR-type spans 1-142; that stretch reads MSLANQIDQF…ISQFLSVLTE (142 aa). Zn(2+) is bound by residues Glu-23, Cys-29, Glu-40, and His-41. A DNA-binding region (H-T-H motif) is located at residues 53–76; it reads NARIAEQLKISPAAVTKALKKLQE. Glu-106, His-107, and His-111 together coordinate Zn(2+).

In terms of assembly, homodimer.

Its activity is regulated as follows. Zinc acts as a corepressor and is required for DNA-binding activity. Binds up to two zinc ligands per monomer. Inactive under zinc deprivation. Zinc-responsive regulator that represses expression of the zit operon in the presence of zinc. Acts by binding two palindromic operator sites overlapping the -35 and -10 boxes of the zit promoter. Could be a sensitive sensor of intracellular zinc to efficiently respond to zinc variations in the environment. The sequence is that of Transcriptional regulator ZitR (zitR) from Lactococcus lactis subsp. cremoris (strain MG1363).